A 475-amino-acid chain; its full sequence is Nucleoprotein (475 aa).

2 stretches are compositionally biased toward basic and acidic residues: residues 421-436 (RSEE…KEDE) and 451-460 (SDALTTEKPK). A disordered region spans residues 421–461 (RSEEAARPSEQNKEDEVVAMDTDAPSRKRRSDALTTEKPKK).

The protein belongs to the nucleorhabdovirus nucleocapsid protein family.

The protein resides in the virion. The protein is Nucleoprotein (N) of Aphis (Hairy beggarticks).